A 79-amino-acid chain; its full sequence is Protein SIP18 (79 aa).

Residues 1-79 (MSNMMNKFAE…DWKTYENMKK (79 aa)) form a disordered region. Residues 8–20 (FAEKLQGNDDSHQ) show a composition bias toward basic and acidic residues.

The sequence is that of Protein SIP18 (SIP18) from Saccharomyces cerevisiae (strain ATCC 204508 / S288c) (Baker's yeast).